The primary structure comprises 243 residues: Secreted RxLR effector protein 28 (243 aa).

Positions 1–26 are cleaved as a signal peptide; sequence MHVSRIIAHIALATAITATTVSPTDA. The RxLR signature appears at 49-52; the sequence is RGLR. Residues 187-243 are disordered; that stretch reads NVDEDKGQNFGHSVSGPPTTTLTGPHTKSGIPPFENLVAPAKGSMPNTRRNGYQFFE. Residues 199–216 show a composition bias toward low complexity; it reads SVSGPPTTTLTGPHTKSG.

It belongs to the RxLR effector family.

It localises to the secreted. The protein resides in the host cytoplasm. The protein localises to the host nucleus. Effector that significantly enhances susceptibilities of grapevine and tobacco to pathogens. Acts as a broad suppressor of cell death to interrupt plant immunity. Completely inhibits cell death induced by cell death-inducing proteins, including the PAMP elicitor INF1 from P.infestans. Reduces the transcriptional levels of the defense-related genes and impairs the H(2)O(2) accumulation in N.benthamiana. The protein is Secreted RxLR effector protein 28 of Plasmopara viticola (Downy mildew of grapevine).